Reading from the N-terminus, the 350-residue chain is Putative aminopeptidase MJ0555 (350 aa).

His62 and Asp175 together coordinate a divalent metal cation. Glu207 functions as the Proton acceptor in the catalytic mechanism. 3 residues coordinate a divalent metal cation: Glu208, Asp230, and His321.

This sequence belongs to the peptidase M42 family. The cofactor is a divalent metal cation.

This is Putative aminopeptidase MJ0555 from Methanocaldococcus jannaschii (strain ATCC 43067 / DSM 2661 / JAL-1 / JCM 10045 / NBRC 100440) (Methanococcus jannaschii).